Consider the following 291-residue polypeptide: Pirin (291 aa).

Residues His-56, His-58, His-101, and Glu-103 each contribute to the Fe cation site.

Belongs to the pirin family. As to quaternary structure, may interact with NF1/CTF1. Interacts with BCL3. Identified in a complex comprised of PIR, BLC3, NFKB1 and target DNA. It depends on Fe cation as a cofactor.

It is found in the nucleus. It localises to the cytoplasm. The catalysed reaction is quercetin + O2 = 2-(3,4-dihydroxybenzoyloxy)-4,6-dihydroxybenzoate + CO. The protein operates within flavonoid metabolism; quercetin degradation. In terms of biological role, transcriptional coregulator of NF-kappa-B which facilitates binding of NF-kappa-B proteins to target kappa-B genes in a redox-state-dependent manner. May be required for efficient terminal myeloid maturation of hematopoietic cells. Has quercetin 2,3-dioxygenase activity (in vitro). This Rattus norvegicus (Rat) protein is Pirin (Pir).